We begin with the raw amino-acid sequence, 248 residues long: Indole-3-glycerol phosphate synthase (248 aa).

Belongs to the TrpC family.

It carries out the reaction 1-(2-carboxyphenylamino)-1-deoxy-D-ribulose 5-phosphate + H(+) = (1S,2R)-1-C-(indol-3-yl)glycerol 3-phosphate + CO2 + H2O. It functions in the pathway amino-acid biosynthesis; L-tryptophan biosynthesis; L-tryptophan from chorismate: step 4/5. In Sulfolobus acidocaldarius (strain ATCC 33909 / DSM 639 / JCM 8929 / NBRC 15157 / NCIMB 11770), this protein is Indole-3-glycerol phosphate synthase.